Reading from the N-terminus, the 33-residue chain is Nigrocin-1 (33 aa).

A disulfide bridge links Cys-27 with Cys-33.

Belongs to the frog skin active peptide (FSAP) family. Brevinin subfamily. Expressed by the skin dorsal glands.

It localises to the secreted. Shows antibacterial activity against both Gram-positive and Gram-negative bacteria and against the fungus C.albicans. Has no hemolytic activity. The protein is Nigrocin-1 of Pelophylax nigromaculatus (Black-spotted frog).